Here is a 586-residue protein sequence, read N- to C-terminus: Eukaryotic translation initiation factor 3 subunit D (586 aa).

The tract at residues 107 to 154 (FGRGGGTVFRGRAQRGGAGQRGGRAGFQRVGAGRGQGGDRYYDNRGAR) is disordered. Positions 108 to 131 (GRGGGTVFRGRAQRGGAGQRGGRA) are enriched in gly residues. Positions 301 to 315 (SLDLVTVNENAADAP) are RNA gate. Acidic residues predominate over residues 566–577 (FEEDDEAAEEEQ). The interval 566 to 586 (FEEDDEAAEEEQEAKGEVEEA) is disordered.

It belongs to the eIF-3 subunit D family. In terms of assembly, component of the eukaryotic translation initiation factor 3 (eIF-3) complex.

The protein localises to the cytoplasm. MRNA cap-binding component of the eukaryotic translation initiation factor 3 (eIF-3) complex, which is involved in protein synthesis of a specialized repertoire of mRNAs and, together with other initiation factors, stimulates binding of mRNA and methionyl-tRNAi to the 40S ribosome. The eIF-3 complex specifically targets and initiates translation of a subset of mRNAs involved in cell proliferation. In the eIF-3 complex, eif3d specifically recognizes and binds the 7-methylguanosine cap of a subset of mRNAs. This chain is Eukaryotic translation initiation factor 3 subunit D, found in Emericella nidulans (strain FGSC A4 / ATCC 38163 / CBS 112.46 / NRRL 194 / M139) (Aspergillus nidulans).